Here is a 260-residue protein sequence, read N- to C-terminus: Serine hydroxymethyltransferase (260 aa).

An N6-(pyridoxal phosphate)lysine modification is found at lysine 60.

Belongs to the SHMT family. Homodimer. Pyridoxal 5'-phosphate is required as a cofactor.

The protein localises to the cytoplasm. It carries out the reaction (6R)-5,10-methylene-5,6,7,8-tetrahydrofolate + glycine + H2O = (6S)-5,6,7,8-tetrahydrofolate + L-serine. Its pathway is one-carbon metabolism; tetrahydrofolate interconversion. It functions in the pathway amino-acid biosynthesis; glycine biosynthesis; glycine from L-serine: step 1/1. Functionally, catalyzes the reversible interconversion of serine and glycine with tetrahydrofolate (THF) serving as the one-carbon carrier. This reaction serves as the major source of one-carbon groups required for the biosynthesis of purines, thymidylate, methionine, and other important biomolecules. Also exhibits THF-independent aldolase activity toward beta-hydroxyamino acids, producing glycine and aldehydes, via a retro-aldol mechanism. This is Serine hydroxymethyltransferase from Corynebacterium sp. (strain P-1).